The sequence spans 468 residues: ATP synthase subunit beta (468 aa).

ATP is bound at residue 155–162 (GGAGVGKT).

The protein belongs to the ATPase alpha/beta chains family. F-type ATPases have 2 components, CF(1) - the catalytic core - and CF(0) - the membrane proton channel. CF(1) has five subunits: alpha(3), beta(3), gamma(1), delta(1), epsilon(1). CF(0) has three main subunits: a(1), b(2) and c(9-12). The alpha and beta chains form an alternating ring which encloses part of the gamma chain. CF(1) is attached to CF(0) by a central stalk formed by the gamma and epsilon chains, while a peripheral stalk is formed by the delta and b chains.

The protein localises to the cell membrane. The catalysed reaction is ATP + H2O + 4 H(+)(in) = ADP + phosphate + 5 H(+)(out). Its function is as follows. Produces ATP from ADP in the presence of a proton gradient across the membrane. The catalytic sites are hosted primarily by the beta subunits. This chain is ATP synthase subunit beta, found in Streptococcus thermophilus (strain ATCC BAA-250 / LMG 18311).